A 531-amino-acid polypeptide reads, in one-letter code: CTP synthase (531 aa).

Residues 1–267 (MTKYIFVTGG…DQIVCEHLRL (267 aa)) are amidoligase domain. Ser13 provides a ligand contact to CTP. Residue Ser13 participates in UTP binding. Residue 14–19 (SLGKGI) participates in ATP binding. An L-glutamine-binding site is contributed by Tyr54. ATP is bound at residue Asp71. Mg(2+) is bound by residues Asp71 and Glu141. CTP contacts are provided by residues 148–150 (DIE), 188–193 (KTKPTQ), and Lys224. Residues 188–193 (KTKPTQ) and Lys224 each bind UTP. An ATP-binding site is contributed by 240–242 (RDA). The region spanning 292 to 531 (KIALVGKYVE…REFVRASLKE (240 aa)) is the Glutamine amidotransferase type-1 domain. An L-glutamine-binding site is contributed by Gly354. The active-site Nucleophile; for glutamine hydrolysis is the Cys381. Residues 382-385 (LGMQ), Glu405, and Arg462 contribute to the L-glutamine site. Catalysis depends on residues His507 and Glu509.

This sequence belongs to the CTP synthase family. In terms of assembly, homotetramer.

It catalyses the reaction UTP + L-glutamine + ATP + H2O = CTP + L-glutamate + ADP + phosphate + 2 H(+). The enzyme catalyses L-glutamine + H2O = L-glutamate + NH4(+). The catalysed reaction is UTP + NH4(+) + ATP = CTP + ADP + phosphate + 2 H(+). It participates in pyrimidine metabolism; CTP biosynthesis via de novo pathway; CTP from UDP: step 2/2. With respect to regulation, allosterically activated by GTP, when glutamine is the substrate; GTP has no effect on the reaction when ammonia is the substrate. The allosteric effector GTP functions by stabilizing the protein conformation that binds the tetrahedral intermediate(s) formed during glutamine hydrolysis. Inhibited by the product CTP, via allosteric rather than competitive inhibition. Functionally, catalyzes the ATP-dependent amination of UTP to CTP with either L-glutamine or ammonia as the source of nitrogen. Regulates intracellular CTP levels through interactions with the four ribonucleotide triphosphates. This chain is CTP synthase, found in Geobacillus kaustophilus (strain HTA426).